An 83-amino-acid polypeptide reads, in one-letter code: Carboxysome shell vertex protein CsoS4A (83 aa).

Residues 1–78 (MKIMQVEKTL…SDLTIIGIID (78 aa)) form the BMV domain.

Belongs to the CcmL/EutN family. CsoS4 subfamily. Homopentamer.

It localises to the carboxysome. Probably forms vertices in the carboxysome, a polyhedral inclusion where RuBisCO (ribulose bisphosphate carboxylase, cbbL-cbbS) is sequestered. Has been modeled to induce curvature upon insertion into an otherwise flat hexagonal layer of major carboxysome subunits. A minor shell protein, only 12 pentamers of CsoS4A/CsoS4B are calculated to be present in each carboxysome. The 2 CsoS4 proteins contribute to the impermeability of the carboxysome to CO(2). Its function is as follows. Unlike beta-carboxysomes, alpha-carboxysomes (Cb) can form without cargo protein. CsoS2 is essential for Cb formation and is also capable of targeting foreign proteins to the Cb. The Cb shell assembles with the aid of CsoS2; CsoS1A, CsoS1B and CsoS1C form the majority of the shell while CsoS4A and CsoS4B form vertices. CsoS1D forms pseudohexamers that probably control metabolite flux into and out of the shell. In Halothiobacillus neapolitanus (strain ATCC 23641 / c2) (Thiobacillus neapolitanus), this protein is Carboxysome shell vertex protein CsoS4A.